Reading from the N-terminus, the 277-residue chain is MAGTETGDAAGTEAPQPQKRYYRQRAHSNPMADHTLRYPVKPEDMDWSELYPEFFAPLPQNQSHDDPKDKKEKRAQAQVEFADIGCGYGGLLVELSPLFPDTLILGLEIRVKVSDYVQDRIRALRAAPGGGFQNIACLRSNAMKHLPNFFHKGQLTKMFFLFPDPHFKRTKHKWRIISPTLLAEYAYVLRVGGLVYTITDVLELHEWMCTHFEGHPLFERVPLEELSEDPIVGHLGTSTEEGKKVLRNGGKNFPAIFRRIQDPALPAVTPTPTPPGH.

A disordered region spans residues Met1 to Arg37. At Ser28 the chain carries Phosphoserine. Positions 85, 108, 110, 141, 142, and 161 each coordinate S-adenosyl-L-methionine. The active site involves Asp164. The segment at Pro165 to Lys173 is alphaC helix. S-adenosyl-L-methionine-binding residues include Thr239 and Glu241. An alpha6 helix region spans residues Thr239–Arg247.

This sequence belongs to the class I-like SAM-binding methyltransferase superfamily. TrmB family. In terms of assembly, catalytic component of the METTL1-WDR4 complex, composed of METTL1 and WDR4. In terms of processing, phosphorylation at Ser-28 by PKB/AKT1 inactivates its methyltransferase activity via a steric interference mechanism in the active site that locally disrupts the catalytic center. Phosphorylation at Ser-28 does not affect the interaction with WDR4.

It is found in the nucleus. The enzyme catalyses guanosine(46) in tRNA + S-adenosyl-L-methionine = N(7)-methylguanosine(46) in tRNA + S-adenosyl-L-homocysteine. It carries out the reaction a guanosine in mRNA + S-adenosyl-L-methionine = an N(7)-methylguanosine in mRNA + S-adenosyl-L-homocysteine. It catalyses the reaction a guanosine in miRNA + S-adenosyl-L-methionine = an N(7)-methylguanosine in miRNA + S-adenosyl-L-homocysteine. It functions in the pathway tRNA modification; N(7)-methylguanine-tRNA biosynthesis. Functionally, catalytic component of METTL1-WDR4 methyltransferase complex that mediates the formation of N(7)-methylguanine in a subset of RNA species, such as tRNAs, mRNAs and microRNAs (miRNAs). Catalyzes the formation of N(7)-methylguanine at position 46 (m7G46) in a large subset of tRNAs that contain the 5'-RAGGU-3' motif within the variable loop. M7G46 interacts with C13-G22 in the D-loop to stabilize tRNA tertiary structure and protect tRNAs from decay. Also acts as a methyltransferase for a subset of internal N(7)-methylguanine in mRNAs. Internal N(7)-methylguanine methylation of mRNAs in response to stress promotes their relocalization to stress granules, thereby suppressing their translation. Also methylates a specific subset of miRNAs, such as let-7. N(7)-methylguanine methylation of let-7 miRNA promotes let-7 miRNA processing by disrupting an inhibitory secondary structure within the primary miRNA transcript (pri-miRNA). Acts as a regulator of embryonic stem cell self-renewal and differentiation. The sequence is that of tRNA (guanine-N(7)-)-methyltransferase from Bos taurus (Bovine).